The primary structure comprises 162 residues: ATP synthase subunit b (162 aa).

Residues 6 to 25 (TLFTLVTFLVLMLAVGKVAW) traverse the membrane as a helical segment.

Belongs to the ATPase B chain family. In terms of assembly, F-type ATPases have 2 components, F(1) - the catalytic core - and F(0) - the membrane proton channel. F(1) has five subunits: alpha(3), beta(3), gamma(1), delta(1), epsilon(1). F(0) has three main subunits: a(1), b(2) and c(10-14). The alpha and beta chains form an alternating ring which encloses part of the gamma chain. F(1) is attached to F(0) by a central stalk formed by the gamma and epsilon chains, while a peripheral stalk is formed by the delta and b chains.

Its subcellular location is the cell membrane. Functionally, f(1)F(0) ATP synthase produces ATP from ADP in the presence of a proton or sodium gradient. F-type ATPases consist of two structural domains, F(1) containing the extramembraneous catalytic core and F(0) containing the membrane proton channel, linked together by a central stalk and a peripheral stalk. During catalysis, ATP synthesis in the catalytic domain of F(1) is coupled via a rotary mechanism of the central stalk subunits to proton translocation. Component of the F(0) channel, it forms part of the peripheral stalk, linking F(1) to F(0). The polypeptide is ATP synthase subunit b (Lacticaseibacillus casei (strain BL23) (Lactobacillus casei)).